The chain runs to 127 residues: Small ribosomal subunit protein uS12 (127 aa).

D89 carries the 3-methylthioaspartic acid modification.

Belongs to the universal ribosomal protein uS12 family. Part of the 30S ribosomal subunit. Contacts proteins S8 and S17. May interact with IF1 in the 30S initiation complex.

Its function is as follows. With S4 and S5 plays an important role in translational accuracy. Interacts with and stabilizes bases of the 16S rRNA that are involved in tRNA selection in the A site and with the mRNA backbone. Located at the interface of the 30S and 50S subunits, it traverses the body of the 30S subunit contacting proteins on the other side and probably holding the rRNA structure together. The combined cluster of proteins S8, S12 and S17 appears to hold together the shoulder and platform of the 30S subunit. The protein is Small ribosomal subunit protein uS12 of Aliarcobacter butzleri (strain RM4018) (Arcobacter butzleri).